We begin with the raw amino-acid sequence, 670 residues long: MAGDDLVETKKGSSKNSKDSNESKLKQKSPAEFFAENKNIAGFDNPGKSLYTTVRELVENALDSAESISELPEVEVTIEEIVKSKFNSMIGLIDRERVDTQLYDDYETEKARGKRLAKEARASEIQAKNLASGKKNKEPGVSKVLKARGEASYYKVTCKDNGKGMPHDDIPNMFGRVLSGTKYGLKQTRGKFGLGAKMALIWSKMSTGLPIEISSSMKSQNYVTFCRLDIDIHRNIPHIHLHEKKGNKEKWHGAEIQVVIEGNWTTYRSKILHYMRQMAVITPYAQFLFRFISETPEKNVTIKFTRRTDVMPPIPIETKHHPSSVDLLLIKRLITDTSKKTLLQFLQNEFVNINKTLAARLIGEMGPDFGPSMAVKSVTSQQMVRIHQLFRQAKFDDPSGDCLSPAGEYNLRLGIIKELHPDMVATYSGSAQVFEGHPFIVEAGVSLGGRDVKQGINIFRFANRIPLLFEQGADVVTRTALKRINWNSYKINQTQDKIGVFVSIVSTKIPFKGTGKEYIGDDISEIATAVKSAIQQCCIQLKSKIVKRLQAREQQERKRSLSRYIPDATGAVYEVLKQMTEEHKTKRKRYGEEDIVMLDKVSKQIITKETLKEKLAEHVEQVDYEMALEYATQSGVSEEPRENIYLQHLDPNKSNFIDLHSPTFVFRLML.

Positions 1-30 (MAGDDLVETKKGSSKNSKDSNESKLKQKSP) are disordered. Positions 7–25 (VETKKGSSKNSKDSNESKL) are enriched in basic and acidic residues. Residues Asn-60, Asp-160, 181–182 (TK), 190–197 (GKFGLGAK), and Lys-516 each bind ATP.

It belongs to the TOP6B family. As to quaternary structure, homodimer. Heterotetramer of two TOP6A and two TOP6B subunits. Interacts with SPO11-2, but not with SPO11-1, RHL1 or BIN4. In terms of tissue distribution, highly expressed in leaves, stems, flowers and seedlings.

It localises to the nucleus. The catalysed reaction is ATP-dependent breakage, passage and rejoining of double-stranded DNA.. Its function is as follows. Component of the DNA topoisomerase VI involved in chromatin organization and progression of endoreduplication cycles. Relaxes both positive and negative superturns and exhibits a strong decatenase activity. The B subunit binds ATP. Involved in cell-elongation processes. The protein is DNA topoisomerase 6 subunit B of Arabidopsis thaliana (Mouse-ear cress).